Consider the following 147-residue polypeptide: Cyanate hydratase (147 aa).

Residues Arg88, Glu91, and Ser114 contribute to the active site.

The protein belongs to the cyanase family.

It catalyses the reaction cyanate + hydrogencarbonate + 3 H(+) = NH4(+) + 2 CO2. In terms of biological role, catalyzes the reaction of cyanate with bicarbonate to produce ammonia and carbon dioxide. The sequence is that of Cyanate hydratase from Acaryochloris marina (strain MBIC 11017).